The following is a 207-amino-acid chain: Outer-membrane lipoprotein carrier protein (207 aa).

A signal peptide spans 1–21; it reads MRLIRMLLATALTFSVIPAHA.

It belongs to the LolA family. Monomer.

Its subcellular location is the periplasm. In terms of biological role, participates in the translocation of lipoproteins from the inner membrane to the outer membrane. Only forms a complex with a lipoprotein if the residue after the N-terminal Cys is not an aspartate (The Asp acts as a targeting signal to indicate that the lipoprotein should stay in the inner membrane). This is Outer-membrane lipoprotein carrier protein from Pseudomonas syringae pv. tomato (strain ATCC BAA-871 / DC3000).